Reading from the N-terminus, the 93-residue chain is Small ribosomal subunit protein uS19 (93 aa).

Belongs to the universal ribosomal protein uS19 family.

Protein S19 forms a complex with S13 that binds strongly to the 16S ribosomal RNA. The polypeptide is Small ribosomal subunit protein uS19 (Saccharopolyspora erythraea (strain ATCC 11635 / DSM 40517 / JCM 4748 / NBRC 13426 / NCIMB 8594 / NRRL 2338)).